Consider the following 206-residue polypeptide: Recombination protein RecR (206 aa).

The C4-type zinc-finger motif lies at 58-73 (CNICGYITEKNICNFC). The Toprim domain occupies 81–178 (STIMIVADNR…KITKLAYGIP (98 aa)).

It belongs to the RecR family.

In terms of biological role, may play a role in DNA repair. It seems to be involved in an RecBC-independent recombinational process of DNA repair. It may act with RecF and RecO. This chain is Recombination protein RecR, found in Phytoplasma mali (strain AT).